A 259-amino-acid polypeptide reads, in one-letter code: Phosphatidylglycerol--prolipoprotein diacylglyceryl transferase (259 aa).

The next 4 helical transmembrane spans lie at Ile-9–Ile-29, Phe-55–Tyr-75, Glu-92–Cys-112, and Val-117–Gly-137. An a 1,2-diacyl-sn-glycero-3-phospho-(1'-sn-glycerol)-binding site is contributed by Arg-138. Transmembrane regions (helical) follow at residues Gln-172 to Phe-192, Gly-201 to Phe-221, and Ile-228 to Leu-248.

Belongs to the Lgt family.

Its subcellular location is the cell inner membrane. It catalyses the reaction L-cysteinyl-[prolipoprotein] + a 1,2-diacyl-sn-glycero-3-phospho-(1'-sn-glycerol) = an S-1,2-diacyl-sn-glyceryl-L-cysteinyl-[prolipoprotein] + sn-glycerol 1-phosphate + H(+). It functions in the pathway protein modification; lipoprotein biosynthesis (diacylglyceryl transfer). Functionally, catalyzes the transfer of the diacylglyceryl group from phosphatidylglycerol to the sulfhydryl group of the N-terminal cysteine of a prolipoprotein, the first step in the formation of mature lipoproteins. The sequence is that of Phosphatidylglycerol--prolipoprotein diacylglyceryl transferase from Rickettsia akari (strain Hartford).